The primary structure comprises 993 residues: Replication protein 1a (993 aa).

Residues 50–409 (RNVLSVKDSE…TIVINGMSMQ (360 aa)) form a methyltransferase region. The Alphavirus-like MT domain maps to 72-290 (HLTQQEFAPH…HDWENIKSFL (219 aa)). The interval 537-565 (LAQPVDEVSDSPEVPSSTPDDTADVCGKE) is disordered. One can recognise a (+)RNA virus helicase ATP-binding domain in the interval 687-838 (CVICNSESLS…KIIPDETSDA (152 aa)). The tract at residues 712–975 (VDGVAGCGKT…LTRHKVTFRY (264 aa)) is ATP-dependent helicase. An ATP-binding site is contributed by 714 to 721 (GVAGCGKT). Residues 839 to 993 (DTTFRSPQDV…DLIAECIARA (155 aa)) enclose the (+)RNA virus helicase C-terminal domain.

This sequence belongs to the bromoviridae replication protein 1a family. As to quaternary structure, interacts with RNA-directed RNA polymerase 2a.

The protein localises to the host endoplasmic reticulum membrane. In terms of biological role, involved in the virus replication. Contains a helicase domain and a methyltransferase domain. The methyltransferase domain is probably involved in viral RNA capping. Involved in the formation of ER membrane spherular invaginations in which RNA replication complexes form. The chain is Replication protein 1a from Cucumber mosaic virus (strain O) (CMV).